We begin with the raw amino-acid sequence, 512 residues long: 2,3-bisphosphoglycerate-independent phosphoglycerate mutase (512 aa).

Mn(2+) contacts are provided by aspartate 11 and serine 61. Serine 61 (phosphoserine intermediate) is an active-site residue. Substrate-binding positions include histidine 122, arginine 152–aspartate 153, arginine 184, arginine 190, arginine 259–arginine 262, and lysine 332. Positions 399, 403, 440, 441, and 459 each coordinate Mn(2+).

Belongs to the BPG-independent phosphoglycerate mutase family. In terms of assembly, monomer. It depends on Mn(2+) as a cofactor.

The enzyme catalyses (2R)-2-phosphoglycerate = (2R)-3-phosphoglycerate. It participates in carbohydrate degradation; glycolysis; pyruvate from D-glyceraldehyde 3-phosphate: step 3/5. In terms of biological role, catalyzes the interconversion of 2-phosphoglycerate and 3-phosphoglycerate. This Francisella tularensis subsp. novicida (strain U112) protein is 2,3-bisphosphoglycerate-independent phosphoglycerate mutase.